A 1058-amino-acid polypeptide reads, in one-letter code: MGVPALFRWLSNKYPKIISPVIEELPYEVNGEEIPVDITKPNPNGEEMDNLYLDMNGIVHPCTHPEGKPPPANEQEMMVEIFKYTDRVVNMVRPRKLLMIAVDGVAPRAKMNQQRARRFRSAQEAKEADEKKEEFRKMLAKQNGNKVDEELQEEVVKKTWDSNVITPGTPFMDILAASLRYWIAYKLNTDPAWEKLKIIISDATVPGEGEHKIMEFIRSQRAAPEHDPNTRHVIYGLDADLIMLGLATHEPHFRVLREDVFFQESRARTCHLCGQQGHKAEECRGQAKEKNGEFDEKQKGSSLKPFIWLHVSILREYLAAELYVPHQPFPFDLERALDDWVFMCFFVGNDFLPHLPSLDIRENGIDTLIAIWRDNIPVMGGYLTEDGHVDLKRAQLILQGLAKQEDAIFRRRRQAEERKLANEKRRKQEAKAREEERARKRRRSSPTYEPMDSPVGHRAPRGGGDAAPPNQLELITPSRGELSRQTRELTHSMVVNRGAVYRANMANKSAAAVLKSKLMQGSQNGQNGEEKSEGATTNNDEPSQDQPDQTEQTSPSVLGKRKADLVEEEDTDAGTPGRDSPAVPVAAKEDELPPDTVRLWEEGYADRYYEQKFGVDPQDKEFRHKVARAYAEGLAWVLLYYFQGCPSWTWYYPYHYAPFAADFVDIGDMEITFDKGVPFKPFEQLMGVLPASSNHAIPKVFHDLMSSPDSEIIDFYPEDFAVDLNGKKFAWQGVILLPFIDEKRLLAAMEKKYPLLTEDEKLRNSVGREVLLISEAHPLYQDLVANFYSKKQGVQKYKLNMRISDGLAGKVERNEAYIPHSSLPSSLEEYGMPSLEDDRSLTVNYEIPKSNHVHKSMLLRGVKFNPPALDNADIQAVKHKAQNSGRSYGGAPLRGGQKGGRINYASDRPNPFAAHLDPGFIPPVPGNVGGGPIMPSGWVPPIPGSAGFSRGPPPPPHGGMSGSHHRPPYGQGPGQYQGNHGQGDHYGQGQQGYYNQSSYYNQSNQYNGRSSDHGGSGGYRGGGGYHRGGNYRGGGYRDQRQYNQDQYSSRNSGGYGRY.

A CCHC-type zinc finger spans residues 268–285 (RTCHLCGQQGHKAEECRG). The stretch at 407–443 (AIFRRRRQAEERKLANEKRRKQEAKAREEERARKRRR) forms a coiled coil. 4 disordered regions span residues 418–490 (RKLA…RELT), 520–588 (QGSQ…VAAK), 881–908 (AQNSGRSYGGAPLRGGQKGGRINYASDR), and 935–1058 (PSGW…YGRY). 2 stretches are compositionally biased toward basic and acidic residues: residues 429-438 (EAKAREEERA) and 481-490 (ELSRQTRELT). A compositionally biased stretch (polar residues) spans 534–556 (GATTNNDEPSQDQPDQTEQTSPS). A compositionally biased stretch (gly residues) spans 971 to 990 (QGPGQYQGNHGQGDHYGQGQ). The span at 991–1009 (QGYYNQSSYYNQSNQYNGR) shows a compositional bias: low complexity. The segment covering 1014–1034 (GGSGGYRGGGGYHRGGNYRGG) has biased composition (gly residues). Residues 1041 to 1050 (QYNQDQYSSR) are compositionally biased toward low complexity.

Belongs to the 5'-3' exonuclease family. XRN2/RAT1 subfamily. Interacts with rai1; the interaction is direct, stabilizes rat1 protein structure and may stimulate its exoribonuclease activity. The interaction also stimulates rai1 pyrophosphohydrolase activity, probably by recruiting it to mRNA substrates.

The protein localises to the nucleus. Possesses 5'-&gt;3' exoribonuclease activity. Required for the processing of nuclear mRNA and rRNA precursors. May promote the termination of transcription by RNA polymerase II. Essential for vegetative cell growth and chromosome segregation. This chain is 5'-3' exoribonuclease 2 (rat1), found in Aspergillus fumigatus (strain ATCC MYA-4609 / CBS 101355 / FGSC A1100 / Af293) (Neosartorya fumigata).